A 208-amino-acid chain; its full sequence is MQFVAFERAKQGTGASRRLRISGKAPGIVYGGSAEPQLIEIDHNALWHALKKEAFHSSILDMELNGQVTKVLLRDVQYHPFKQQVLHVDFQRVDEKTRVHLKVPLHFEGVEGSQAVKVEGCTVTPLIHELDVMCMPAQLPEFIKVDLSGLTSKSTMGLQSVKLPHGVKAVVRGSNKNPALVSIKLPEVVADATAAAAPAAAPAKKGKK.

It belongs to the bacterial ribosomal protein bL25 family. CTC subfamily. Part of the 50S ribosomal subunit; part of the 5S rRNA/L5/L18/L25 subcomplex. Contacts the 5S rRNA. Binds to the 5S rRNA independently of L5 and L18.

Functionally, this is one of the proteins that binds to the 5S RNA in the ribosome where it forms part of the central protuberance. The polypeptide is Large ribosomal subunit protein bL25 (Acidovorax ebreus (strain TPSY) (Diaphorobacter sp. (strain TPSY))).